The primary structure comprises 368 residues: Proteinase-activated receptor 3 (368 aa).

The N-terminal stretch at 1-21 (MEMKVLILVGVRLLFLPTTVC) is a signal peptide. A propeptide spans 22-37 (QSGMKHVSDNSALTAE) (removed for receptor activation). Over 38 to 93 (SFNGNEHSFEEFPLSDIEGWTGATTTIKAKCPEESITTLHVNNATMGYLRSSLSTK) the chain is Extracellular. N-linked (GlcNAc...) asparagine glycosylation is present at Asn80. The chain crosses the membrane as a helical span at residues 94-114 (VIPAIYILVFVIGVPANIVTL). The Cytoplasmic portion of the chain corresponds to 115 to 123 (WKLSSRTKS). Residues 124–144 (ICLVIFHTNLAIADLLFCVTL) traverse the membrane as a helical segment. Topologically, residues 145–166 (PFKIAYHLNGNDWVFGEVMCRV) are extracellular. The cysteines at positions 164 and 243 are disulfide-linked. The helical transmembrane segment at 167–187 (TTVAFYGNMYCAILILTCMGI) threads the bilayer. The Cytoplasmic portion of the chain corresponds to 188-208 (NRYLATVHPFTYRKLPKRNFT). Residues 209 to 229 (LLMCGVVWVMVVLYMLPLAIL) form a helical membrane-spanning segment. The Extracellular portion of the chain corresponds to 230–257 (KQEYHLVQPGITTCHDVHDTCESPLPFQ). Residues 258-278 (FYYFVSLAFFGFLIPFVVSVF) form a helical membrane-spanning segment. The Cytoplasmic portion of the chain corresponds to 279–300 (CYTTLIHKLNAQDRKWLRYIKA). Residues 301-321 (VLLILVIFTICFAPTNIILII) form a helical membrane-spanning segment. Residues 322 to 338 (HHANYYYSNTDSLYFMY) are Extracellular-facing. A helical membrane pass occupies residues 339–359 (LIALCLGSLNSCLDPFLYFIM). Residues 360 to 368 (SKIVDQLTS) are Cytoplasmic-facing.

Belongs to the G-protein coupled receptor 1 family. Interacts with INSC/inscuteable and GPSM2. A proteolytic cleavage generates a new N-terminus that functions as a tethered ligand.

It localises to the cell membrane. Functionally, receptor for activated thrombin coupled to G proteins that stimulate phosphoinositide hydrolysis. The chain is Proteinase-activated receptor 3 (F2rl2) from Rattus norvegicus (Rat).